We begin with the raw amino-acid sequence, 29 residues long: Histone H2B (29 aa).

A disordered region spans residues 1 to 29; sequence MPEPAKSAPKKGSTRTAAKGGKKRRKSRK. An N6-acetyllysine mark is found at Lys-6 and Lys-11. The residue at position 13 (Ser-13) is a Phosphoserine. Basic residues predominate over residues 20 to 29; the sequence is GGKKRRKSRK.

The protein belongs to the histone H2B family. In terms of assembly, the nucleosome is a histone octamer containing two molecules each of H2A, H2B, H3 and H4 assembled in one H3-H4 heterotetramer and two H2A-H2B heterodimers. The octamer wraps approximately 147 bp of DNA. Monoubiquitination at the C-terminal Lys gives a specific tag for epigenetic transcriptional activation and is also prerequisite for histone H3 'Lys-4' and 'Lys-79' methylation. Post-translationally, phosphorylated during apoptosis; which facilitates apoptotic chromatin condensation.

Its subcellular location is the nucleus. It is found in the chromosome. Core component of nucleosome. Nucleosomes wrap and compact DNA into chromatin, limiting DNA accessibility to the cellular machineries which require DNA as a template. Histones thereby play a central role in transcription regulation, DNA repair, DNA replication and chromosomal stability. DNA accessibility is regulated via a complex set of post-translational modifications of histones, also called histone code, and nucleosome remodeling. The polypeptide is Histone H2B (Cyprinus carpio (Common carp)).